Here is a 71-residue protein sequence, read N- to C-terminus: Protein CYSTEINE-RICH TRANSMEMBRANE MODULE 3 (71 aa).

The disordered stretch occupies residues 30-49; it reads VMMKDSPQTVQPPHEGQSKG. The chain crosses the membrane as a helical span at residues 48–64; sequence KGSGGFLRGCLAAMCCC.

The protein belongs to the CYSTM1 family. In terms of assembly, heterodimers. Interacts with CYSTM7 and WIH1/CYSTM13. In terms of tissue distribution, mostly expressed in leaves and flowers and, to a lower extent, in stems, siliques, shoots and roots.

It is found in the cell membrane. The protein resides in the cytoplasm. The protein localises to the mitochondrion. Negatively regulates salt stress responses and Na(+) homeostasis. Prevents Na(+) efflux, disturbs reactive oxygen species (ROS) homeostasis, and represses the expression of nuclear salt stress-responsive genes. Involved in resistance to abiotic stress. This is Protein CYSTEINE-RICH TRANSMEMBRANE MODULE 3 from Arabidopsis thaliana (Mouse-ear cress).